The primary structure comprises 246 residues: 14-3-3 protein beta/alpha (246 aa).

Met-1 is subject to N-acetylmethionine. Thr-2 is modified (N-acetylthreonine; in 14-3-3 protein beta/alpha, N-terminally processed). A Phosphothreonine modification is found at Thr-2. Residue Lys-5 is modified to N6-acetyllysine. N6-acetyllysine; alternate is present on Lys-51. Lys-51 is covalently cross-linked (Glycyl lysine isopeptide (Lys-Gly) (interchain with G-Cter in SUMO2); alternate). At Ser-60 the chain carries Phosphoserine. Residue Lys-70 is modified to N6-acetyllysine. 3'-nitrotyrosine is present on residues Tyr-84 and Tyr-106. Lys-117 carries the N6-acetyllysine modification. Phosphoserine is present on residues Ser-186 and Ser-232.

This sequence belongs to the 14-3-3 family. In terms of assembly, homodimer. Interacts with SAMSN1 and PRKCE. Interacts with AKAP13. Interacts with SSH1 and TORC2/CRTC2. Interacts with ABL1; the interaction results in cytoplasmic location of ABL1 and inhibition of cABL-mediated apoptosis. Interacts with ROR2 (dimer); the interaction results in phosphorylation of YWHAB on tyrosine residues. Interacts with GAB2. Interacts with YAP1 (phosphorylated form). Interacts with the phosphorylated (by AKT1) form of SRPK2. Interacts with PKA-phosphorylated AANAT. Interacts with MYO1C. Interacts with SIRT2. Interacts with the 'Thr-369' phosphorylated form of DAPK2. Interacts with PI4KB, TBC1D22A and TBC1D22B. Interacts with the 'Ser-1134' and 'Ser-1161' phosphorylated form of SOS1. Interacts (via phosphorylated form) with YWHAB; this interaction occurs in a protein kinase AKT1-dependent manner. Interacts with SLITRK1. Interacts with SYNPO2 (phosphorylated form); YWHAB competes with ACTN2 for interaction with SYNPO2. Interacts with RIPOR2 (via phosphorylated form); this interaction occurs in a chemokine-dependent manner and does not compete for binding of RIPOR2 with RHOA nor blocks inhibition of RIPOR2-mediated RHOA activity. Interacts with MARK2 and MARK3. Interacts with TESK1; the interaction is dependent on the phosphorylation of TESK1 'Ser-439' and inhibits TESK1 kinase activity. Interacts with MEFV. Interacts with HDAC4. Interacts with ADAM22 (via C-terminus). In terms of processing, the alpha, brain-specific form differs from the beta form in being phosphorylated. Phosphorylated on Ser-60 by protein kinase C delta type catalytic subunit in a sphingosine-dependent fashion. Post-translationally, isoform Short contains a N-acetylmethionine at position 1.

The protein localises to the cytoplasm. It is found in the melanosome. Functionally, adapter protein implicated in the regulation of a large spectrum of both general and specialized signaling pathways. Binds to a large number of partners, usually by recognition of a phosphoserine or phosphothreonine motif. Binding generally results in the modulation of the activity of the binding partner. Negative regulator of osteogenesis. Blocks the nuclear translocation of the phosphorylated form (by AKT1) of SRPK2 and antagonizes its stimulatory effect on cyclin D1 expression resulting in blockage of neuronal apoptosis elicited by SRPK2. Negative regulator of signaling cascades that mediate activation of MAP kinases via AKAP13. The polypeptide is 14-3-3 protein beta/alpha (Ywhab) (Rattus norvegicus (Rat)).